A 443-amino-acid chain; its full sequence is F-box only protein 39 (443 aa).

Positions 16–61 constitute an F-box domain; it reads WATLPDVCLRRVFWWLGDRDRSRAALVCRKWNQMMYSADLWRYRTI.

Directly interacts with SKP1 and CUL1.

In terms of biological role, substrate-recognition component of the SCF (SKP1-CUL1-F-box protein)-type E3 ubiquitin ligase complex. The chain is F-box only protein 39 (FBXO39) from Bos taurus (Bovine).